Consider the following 504-residue polypeptide: Biotinidase (504 aa).

The signal sequence occupies residues 1–20 (MFSFGTVFTFALLLIPLTEA). One can recognise a CN hydrolase domain in the interval 30–309 (YEHNLILNPD…GRLLVARVPV (280 aa)). Glu79 functions as the Proton acceptor in the catalytic mechanism. Asn86 and Asn117 each carry an N-linked (GlcNAc...) asparagine glycan. Lys181 functions as the Proton donor in the catalytic mechanism. The active-site Nucleophile is the Cys214. 3 N-linked (GlcNAc...) asparagine glycosylation sites follow: Asn261, Asn365, and Asn375.

Belongs to the carbon-nitrogen hydrolase superfamily. BTD/VNN family.

The protein localises to the secreted. It localises to the extracellular space. It catalyses the reaction biocytin + H2O = biotin + L-lysine. The enzyme catalyses biotin amide + H2O = biotin + NH4(+). Its function is as follows. Catalytic release of biotin from biocytin, the product of biotin-dependent carboxylases degradation. This Takifugu rubripes (Japanese pufferfish) protein is Biotinidase (btd).